We begin with the raw amino-acid sequence, 318 residues long: NADH-ubiquinone oxidoreductase chain 1 (318 aa).

8 consecutive transmembrane segments (helical) span residues 2–22 (FMIN…FLTL), 68–88 (ISMF…MWTP), 100–120 (LGIL…LWSG), 146–166 (LAII…PTLI), 171–191 (HIWL…STLA), 222–242 (LFFL…TILF), 253–273 (ELYT…FLWV), and 293–313 (FLPL…ITAG).

Belongs to the complex I subunit 1 family. Core subunit of respiratory chain NADH dehydrogenase (Complex I) which is composed of 45 different subunits.

Its subcellular location is the mitochondrion inner membrane. The catalysed reaction is a ubiquinone + NADH + 5 H(+)(in) = a ubiquinol + NAD(+) + 4 H(+)(out). Functionally, core subunit of the mitochondrial membrane respiratory chain NADH dehydrogenase (Complex I) which catalyzes electron transfer from NADH through the respiratory chain, using ubiquinone as an electron acceptor. Essential for the catalytic activity and assembly of complex I. This is NADH-ubiquinone oxidoreductase chain 1 (MT-ND1) from Hipposideros armiger terasensis (Formosan leaf-nosed bat).